Consider the following 238-residue polypeptide: Ribonuclease PH (238 aa).

Residues Arg-86 and Gly-124–Arg-126 each bind phosphate.

It belongs to the RNase PH family. As to quaternary structure, homohexameric ring arranged as a trimer of dimers.

The enzyme catalyses tRNA(n+1) + phosphate = tRNA(n) + a ribonucleoside 5'-diphosphate. In terms of biological role, phosphorolytic 3'-5' exoribonuclease that plays an important role in tRNA 3'-end maturation. Removes nucleotide residues following the 3'-CCA terminus of tRNAs; can also add nucleotides to the ends of RNA molecules by using nucleoside diphosphates as substrates, but this may not be physiologically important. Probably plays a role in initiation of 16S rRNA degradation (leading to ribosome degradation) during starvation. This chain is Ribonuclease PH, found in Brucella melitensis biotype 2 (strain ATCC 23457).